A 59-amino-acid polypeptide reads, in one-letter code: Large ribosomal subunit protein uL30 (59 aa).

This sequence belongs to the universal ribosomal protein uL30 family. Part of the 50S ribosomal subunit.

In Mycobacterium sp. (strain JLS), this protein is Large ribosomal subunit protein uL30.